The following is a 494-amino-acid chain: 4-trimethylaminobutyraldehyde dehydrogenase (494 aa).

Residue S2 is modified to N-acetylserine. N6-acetyllysine; alternate is present on K30. Position 30 is an N6-succinyllysine; alternate (K30). At K59 the chain carries N6-succinyllysine. NAD(+) is bound by residues K180 and 232 to 236 (GSVPT). E254 functions as the Proton acceptor in the catalytic mechanism. The active-site Nucleophile is the C288. K298 carries the post-translational modification N6-acetyllysine. At K303 the chain carries N6-acetyllysine; alternate. K303 carries the N6-succinyllysine; alternate modification. K344 is subject to N6-acetyllysine. E391 is an NAD(+) binding site.

It belongs to the aldehyde dehydrogenase family. In terms of assembly, homotetramer.

It is found in the cytoplasm. The protein localises to the cytosol. It carries out the reaction 4-(trimethylamino)butanal + NAD(+) + H2O = 4-(trimethylamino)butanoate + NADH + 2 H(+). It catalyses the reaction an aldehyde + NAD(+) + H2O = a carboxylate + NADH + 2 H(+). The catalysed reaction is 4-aminobutanal + NAD(+) + H2O = 4-aminobutanoate + NADH + 2 H(+). The enzyme catalyses formaldehyde + NAD(+) + H2O = formate + NADH + 2 H(+). It carries out the reaction acetaldehyde + NAD(+) + H2O = acetate + NADH + 2 H(+). It catalyses the reaction imidazole-4-acetaldehyde + NAD(+) + H2O = imidazole-4-acetate + NADH + 2 H(+). The catalysed reaction is acrolein + NAD(+) + H2O = acrylate + NADH + 2 H(+). The enzyme catalyses (5-hydroxyindol-3-yl)acetaldehyde + NAD(+) + H2O = (5-hydroxyindol-3-yl)acetate + NADH + 2 H(+). It carries out the reaction 3,4-dihydroxyphenylacetaldehyde + NAD(+) + H2O = 3,4-dihydroxyphenylacetate + NADH + 2 H(+). It catalyses the reaction spermine monoaldehyde + NAD(+) + H2O = N-(2-carboxyethyl)spermidine + NADH + 2 H(+). The catalysed reaction is propanal + NAD(+) + H2O = propanoate + NADH + 2 H(+). The enzyme catalyses butanal + NAD(+) + H2O = butanoate + NADH + 2 H(+). It carries out the reaction pentanal + NAD(+) + H2O = pentanoate + NADH + 2 H(+). It catalyses the reaction hexanal + NAD(+) + H2O = hexanoate + NADH + 2 H(+). The protein operates within amine and polyamine biosynthesis; carnitine biosynthesis. Functionally, converts gamma-trimethylaminobutyraldehyde into gamma-butyrobetaine with high efficiency (in vitro). Can catalyze the irreversible oxidation of a broad range of aldehydes to the corresponding acids in an NAD-dependent reaction, but with low efficiency. Catalyzes the oxidation of aldehydes arising from biogenic amines and polyamines. This Sus scrofa (Pig) protein is 4-trimethylaminobutyraldehyde dehydrogenase (ALDH9A1).